Reading from the N-terminus, the 224-residue chain is Attacin-A (224 aa).

Residues methionine 1–alanine 20 form the signal peptide. The propeptide occupies leucine 21–arginine 34.

It belongs to the attacin/sarcotoxin-2 family. Hemolymph (at protein level).

It localises to the secreted. Its function is as follows. Hemolymph antibacterial protein. The protein is Attacin-A (AttA) of Drosophila melanogaster (Fruit fly).